A 251-amino-acid chain; its full sequence is Flap endonuclease Xni (251 aa).

Mg(2+) is bound at residue Asp-104. The 90-residue stretch at Val-160–Leu-249 folds into the 5'-3' exonuclease domain. K(+) contacts are provided by Leu-171, Ala-172, Pro-180, Val-182, and Ile-185. Residues Gly-184–Ser-189 form an interaction with DNA region.

It belongs to the Xni family. Requires Mg(2+) as cofactor. It depends on K(+) as a cofactor.

Its function is as follows. Has flap endonuclease activity. During DNA replication, flap endonucleases cleave the 5'-overhanging flap structure that is generated by displacement synthesis when DNA polymerase encounters the 5'-end of a downstream Okazaki fragment. This Salmonella paratyphi A (strain ATCC 9150 / SARB42) protein is Flap endonuclease Xni.